We begin with the raw amino-acid sequence, 604 residues long: Elongation factor 4 (604 aa).

The 183-residue stretch at D2 to R184 folds into the tr-type G domain. Residues D14–T19 and N131–D134 each bind GTP.

This sequence belongs to the TRAFAC class translation factor GTPase superfamily. Classic translation factor GTPase family. LepA subfamily.

The protein resides in the cell inner membrane. It carries out the reaction GTP + H2O = GDP + phosphate + H(+). Required for accurate and efficient protein synthesis under certain stress conditions. May act as a fidelity factor of the translation reaction, by catalyzing a one-codon backward translocation of tRNAs on improperly translocated ribosomes. Back-translocation proceeds from a post-translocation (POST) complex to a pre-translocation (PRE) complex, thus giving elongation factor G a second chance to translocate the tRNAs correctly. Binds to ribosomes in a GTP-dependent manner. This is Elongation factor 4 from Methylibium petroleiphilum (strain ATCC BAA-1232 / LMG 22953 / PM1).